A 122-amino-acid polypeptide reads, in one-letter code: Large ribosomal subunit protein uL14 (122 aa).

This sequence belongs to the universal ribosomal protein uL14 family. As to quaternary structure, part of the 50S ribosomal subunit. Forms a cluster with proteins L3 and L19. In the 70S ribosome, L14 and L19 interact and together make contacts with the 16S rRNA in bridges B5 and B8.

Its function is as follows. Binds to 23S rRNA. Forms part of two intersubunit bridges in the 70S ribosome. The sequence is that of Large ribosomal subunit protein uL14 from Trichodesmium erythraeum (strain IMS101).